The primary structure comprises 336 residues: Protein DIA1 (336 aa).

The protein localises to the cytoplasm. In terms of biological role, involved in regulation of invasive growth. This chain is Protein DIA1 (DIA1), found in Saccharomyces cerevisiae (strain ATCC 204508 / S288c) (Baker's yeast).